We begin with the raw amino-acid sequence, 343 residues long: Beta-ketoacyl-[acyl-carrier-protein] synthase III 1 (343 aa).

Residues Cys-122 and His-268 contribute to the active site. Positions 269–273 are ACP-binding; sequence QANVR. Asn-299 is a catalytic residue.

Belongs to the thiolase-like superfamily. FabH family. Homodimer.

The protein resides in the cytoplasm. It carries out the reaction malonyl-[ACP] + acetyl-CoA + H(+) = 3-oxobutanoyl-[ACP] + CO2 + CoA. Its pathway is lipid metabolism; fatty acid biosynthesis. Essential enzyme that catalyzes the condensation reaction of fatty acid synthesis by the addition to an acyl acceptor of two carbons from malonyl-ACP. Catalyzes the first condensation reaction which initiates fatty acid synthesis and may therefore play a role in governing the total rate of fatty acid production. Possesses both acetoacetyl-ACP synthase and acetyl transacylase activities. Its substrate specificity determines the biosynthesis of branched-chain of fatty acids. The sequence is that of Beta-ketoacyl-[acyl-carrier-protein] synthase III 1 from Streptomyces coelicolor (strain ATCC BAA-471 / A3(2) / M145).